The primary structure comprises 358 residues: Peptide chain release factor 1 (358 aa).

Gln-235 carries the post-translational modification N5-methylglutamine.

Belongs to the prokaryotic/mitochondrial release factor family. Methylated by PrmC. Methylation increases the termination efficiency of RF1.

It is found in the cytoplasm. Peptide chain release factor 1 directs the termination of translation in response to the peptide chain termination codons UAG and UAA. The chain is Peptide chain release factor 1 from Neisseria meningitidis serogroup B (strain ATCC BAA-335 / MC58).